Here is a 417-residue protein sequence, read N- to C-terminus: Ribonucleoside-diphosphate reductase small chain (417 aa).

Aspartate 168, glutamate 199, and histidine 202 together coordinate Fe cation. Residue tyrosine 206 is part of the active site. Fe cation is bound by residues glutamate 261, glutamate 297, and histidine 300.

This sequence belongs to the ribonucleoside diphosphate reductase small chain family. As to quaternary structure, heterotetramer composed of a homodimer of the large subunit (R1) and a homodimer of the small subunit (R2). Larger multisubunit protein complex are also active, composed of (R1)n(R2)n. Requires Fe cation as cofactor.

The enzyme catalyses a 2'-deoxyribonucleoside 5'-diphosphate + [thioredoxin]-disulfide + H2O = a ribonucleoside 5'-diphosphate + [thioredoxin]-dithiol. In terms of biological role, ribonucleoside-diphosphate reductase holoenzyme provides the precursors necessary for viral DNA synthesis. Allows virus growth in non-dividing cells. Catalyzes the biosynthesis of deoxyribonucleotides from the corresponding ribonucleotides. This Acanthamoeba polyphaga mimivirus (APMV) protein is Ribonucleoside-diphosphate reductase small chain (RNR2).